We begin with the raw amino-acid sequence, 141 residues long: Arsenate reductase (141 aa).

C12 serves as the catalytic Nucleophile; cysteine thioarsenate intermediate.

It belongs to the ArsC family. Monomer in solution.

The enzyme catalyses [glutaredoxin]-dithiol + arsenate + glutathione + H(+) = glutathionyl-S-S-[glutaredoxin] + arsenite + H2O. Its activity is regulated as follows. Inhibited by the thiol reagents iodoacetate (IAA) and N-ethylmaleimide (NEM). Activity is rapidly inactivated by the histidine-modifying reagent diethylpyrocarbonate (DEPC). Its function is as follows. Involved in resistance to arsenate. Catalyzes the reduction of arsenate [As(V)] to arsenite [As(III)]. The resulting arsenite is then extruded from the cell via the ArsAB transport system. The sequence is that of Arsenate reductase from Escherichia coli.